A 79-amino-acid polypeptide reads, in one-letter code: Serine protease inhibitor Kazal-type 1 (79 aa).

The first 23 residues, 1–23 (MKVASIFLLTALVLMSLSGNSGA), serve as a signal peptide directing secretion. Positions 26-79 (LGREAKCTNEVNGCPRIYNPVCGTDGVTYSNECLLCMENKERQTPVLIQKSGPC) constitute a Kazal-like domain. Cystine bridges form between Cys32–Cys61, Cys39–Cys58, and Cys47–Cys79.

The protein localises to the secreted. Its function is as follows. Serine protease inhibitor which exhibits anti-trypsin activity. In the pancreas, protects against trypsin-catalyzed premature activation of zymogens. Functionally, in the male reproductive tract, binds to sperm heads where it modulates sperm capacitance by inhibiting calcium uptake and nitrogen oxide (NO) production. The protein is Serine protease inhibitor Kazal-type 1 (SPINK1) of Bos taurus (Bovine).